The sequence spans 204 residues: Large ribosomal subunit protein uL4 (204 aa).

Residues 56 to 79 (VSGTTAKPYGQKRTGRARQGSLRS) are disordered.

The protein belongs to the universal ribosomal protein uL4 family. Part of the 50S ribosomal subunit.

Functionally, one of the primary rRNA binding proteins, this protein initially binds near the 5'-end of the 23S rRNA. It is important during the early stages of 50S assembly. It makes multiple contacts with different domains of the 23S rRNA in the assembled 50S subunit and ribosome. In terms of biological role, forms part of the polypeptide exit tunnel. The protein is Large ribosomal subunit protein uL4 of Wolbachia pipientis subsp. Culex pipiens (strain wPip).